Reading from the N-terminus, the 263-residue chain is Putative 2-aminoethylphosphonate transport system permease protein PhnV (263 aa).

6 helical membrane-spanning segments follow: residues 13–33 (GVVA…VILM), 69–89 (LTIG…AALA), 104–124 (VFYL…LVAF), 131–151 (MNGT…AFTF), 185–205 (LPLL…LSMG), and 233–253 (NIAD…LLMM). Residues 65 to 253 (LLASLTIGFC…LVAITLLLMM (189 aa)) form the ABC transmembrane type-1 domain.

Belongs to the binding-protein-dependent transport system permease family.

The protein resides in the cell inner membrane. Its function is as follows. Probably part of the PhnSTUV complex (TC 3.A.1.11.5) involved in 2-aminoethylphosphonate import. Probably responsible for the translocation of the substrate across the membrane. The polypeptide is Putative 2-aminoethylphosphonate transport system permease protein PhnV (phnV) (Salmonella typhi).